Consider the following 777-residue polypeptide: Acyl-CoA dehydrogenase family member 11 (777 aa).

FAD is bound by residues 501-511 (FCMTEPDVASS), 509-511 (ASS), 535-537 (WSS), and Ser-537. Ser-511 lines the substrate pocket. 626–629 (GPGR) lines the substrate pocket. Residues Arg-654, Gln-724, and 724 to 728 (QVCGG) contribute to the FAD site. Gly-752 is a binding site for substrate. FAD-binding positions include 753–755 (PDE) and Glu-755.

It belongs to the acyl-CoA dehydrogenase family. Homodimer. FAD is required as a cofactor.

The protein localises to the peroxisome. The protein resides in the mitochondrion membrane. It carries out the reaction a 2,3-saturated acyl-CoA + oxidized [electron-transfer flavoprotein] + H(+) = a (2E)-enoyl-CoA + reduced [electron-transfer flavoprotein]. It catalyses the reaction docosanoyl-CoA + oxidized [electron-transfer flavoprotein] + H(+) = (2E)-docosenoyl-CoA + reduced [electron-transfer flavoprotein]. The catalysed reaction is tetracosanoyl-CoA + oxidized [electron-transfer flavoprotein] + H(+) = (2E)-tetracosenoyl-CoA + reduced [electron-transfer flavoprotein]. The enzyme catalyses eicosanoyl-CoA + oxidized [electron-transfer flavoprotein] + H(+) = (2E)-eicosenoyl-CoA + reduced [electron-transfer flavoprotein]. It carries out the reaction hexacosanoyl-CoA + oxidized [electron-transfer flavoprotein] + H(+) = (2E)-hexacosenoyl-CoA + reduced [electron-transfer flavoprotein]. It catalyses the reaction tricosanoyl-CoA + oxidized [electron-transfer flavoprotein] + H(+) = (2E)-tricosenoyl-CoA + reduced [electron-transfer flavoprotein]. It participates in lipid metabolism; fatty acid beta-oxidation. Functionally, acyl-CoA dehydrogenase, that exhibits maximal activity towards saturated C22-CoA. Probably participates in beta-oxydation and energy production but could also play a role in the metabolism of specific fatty acids to control fatty acids composition of cellular lipids in brain. The polypeptide is Acyl-CoA dehydrogenase family member 11 (ACAD11) (Gallus gallus (Chicken)).